The following is a 605-amino-acid chain: DNA primase (605 aa).

Residues 39 to 63 form a CHC2-type zinc finger; it reads CPFHHERTPSFHVVPDKKMYYCFGC. Residues 257–338 form the Toprim domain; it reads RAAIICEGYM…EVRIVELNGG (82 aa). Residues E263, D307, and D309 each contribute to the Mg(2+) site.

The protein belongs to the DnaG primase family. Monomer. Interacts with DnaB. Zn(2+) is required as a cofactor. The cofactor is Mg(2+).

The catalysed reaction is ssDNA + n NTP = ssDNA/pppN(pN)n-1 hybrid + (n-1) diphosphate.. Its function is as follows. RNA polymerase that catalyzes the synthesis of short RNA molecules used as primers for DNA polymerase during DNA replication. In Treponema pallidum (strain Nichols), this protein is DNA primase.